We begin with the raw amino-acid sequence, 1342 residues long: DNA-directed RNA polymerase subunit beta (1342 aa).

The protein belongs to the RNA polymerase beta chain family. In terms of assembly, the RNAP catalytic core consists of 2 alpha, 1 beta, 1 beta' and 1 omega subunit. When a sigma factor is associated with the core the holoenzyme is formed, which can initiate transcription.

It catalyses the reaction RNA(n) + a ribonucleoside 5'-triphosphate = RNA(n+1) + diphosphate. Functionally, DNA-dependent RNA polymerase catalyzes the transcription of DNA into RNA using the four ribonucleoside triphosphates as substrates. The protein is DNA-directed RNA polymerase subunit beta of Serratia proteamaculans (strain 568).